The sequence spans 148 residues: Putative nickel-responsive regulator (148 aa).

Positions 77, 88, 90, and 96 each coordinate Ni(2+).

Belongs to the transcriptional regulatory CopG/NikR family. Requires Ni(2+) as cofactor.

Functionally, transcriptional regulator. The chain is Putative nickel-responsive regulator from Bradyrhizobium diazoefficiens (strain JCM 10833 / BCRC 13528 / IAM 13628 / NBRC 14792 / USDA 110).